The following is a 380-amino-acid chain: Phospho-N-acetylmuramoyl-pentapeptide-transferase (380 aa).

11 helical membrane-spanning segments follow: residues Ile26–Glu46, Met75–Gly95, Leu98–Trp118, Leu135–Pro155, Gly160–Pro180, Leu183–Thr203, Ile222–Phe242, Leu259–Tyr279, Val283–Leu303, Ala311–Phe331, and Lys357–Leu377.

The protein belongs to the glycosyltransferase 4 family. MraY subfamily. Requires Mg(2+) as cofactor.

The protein resides in the cell inner membrane. The enzyme catalyses UDP-N-acetyl-alpha-D-muramoyl-L-alanyl-gamma-D-glutamyl-meso-2,6-diaminopimeloyl-D-alanyl-D-alanine + di-trans,octa-cis-undecaprenyl phosphate = di-trans,octa-cis-undecaprenyl diphospho-N-acetyl-alpha-D-muramoyl-L-alanyl-D-glutamyl-meso-2,6-diaminopimeloyl-D-alanyl-D-alanine + UMP. It functions in the pathway cell wall biogenesis; peptidoglycan biosynthesis. Catalyzes the initial step of the lipid cycle reactions in the biosynthesis of the cell wall peptidoglycan: transfers peptidoglycan precursor phospho-MurNAc-pentapeptide from UDP-MurNAc-pentapeptide onto the lipid carrier undecaprenyl phosphate, yielding undecaprenyl-pyrophosphoryl-MurNAc-pentapeptide, known as lipid I. This Anaeromyxobacter sp. (strain Fw109-5) protein is Phospho-N-acetylmuramoyl-pentapeptide-transferase.